The chain runs to 904 residues: MSDTGTKRRIERFDPAIEPKWREFWEREGIFKAGRRAGAPRRYILEMFPYPSGDLHIGHLKNYVIGDALTRYYVIRGYDVLHPFGWDAFGLPAENAAIKYGRHPREWTYGNIAESKKSLEIAGIMYDWSREVTTCDPDYYRWNQWLFLLLYRKGLAYRAKATVNWDPVDQTVLANEQVDAEGRSWRSGAKVEKRELEQWFFRITAYAERLLNDLDKLDKWPENVKTMQRNWIGRSEGAEVTFLALPPGADLHAPPPPDAEPLVVFTTRPDTLWGATFMVLAPEHPLVSKLTAPERRAEVEAYIARARMESEIERTSATREKTGVFLGSYAINPVNDERIPIWIADYVLMGYGAGAIMAVPAHDERDFAFARQFGLPVRVVVQPPGETLDGATMTEAWPGDGVMVNSGPINGLPVGKGEGQSVKATIAWLEANGKGKGTVTYRLRDWLISRQRYWGTPIPMLHLPDGTIKPVPEDQLPVVLPEVQDYLPKGKSPLAAAESWVNTIDPETGQPARRDTDTMDTFVDSSWYFLRFCDARNDREIFSREAAHRWMPVDQYIGGVEHAILHLLYARFITKVLYDEGLVPDDEPFRALFTQGMVQRRVRTPLEVVAPGMVRFPEELRRKLELPADAQSLDQARALLKERGYTLEEESNGGFTAVSGPVTMSKSAGNGIPVGPFVRQYGSDVARIVVLFAAPPENSMEWTDEGVAGAQRFLNRIVALFSPDREEIVAALNSGNGAAPEGEERALYRKLHETIRKVTLDTEQFRFNTAIAALMELLNEASRYRSEAGRVTPVFAQTAATFARLLSPFAPHLAEELHSWCGGTGSVYDTGWPEWDEAALALDEVEIVLQVNGKLRGRIMAPANADEQQLREWALTNPRVLSFVGDKTVRKVVVVPGKLVNVVV.

The 'HIGH' region signature appears at 49–59 (PYPSGDLHIGH). The 'KMSKS' region motif lies at 663-667 (TMSKS). Lys-666 serves as a coordination point for ATP.

Belongs to the class-I aminoacyl-tRNA synthetase family.

Its subcellular location is the cytoplasm. It catalyses the reaction tRNA(Leu) + L-leucine + ATP = L-leucyl-tRNA(Leu) + AMP + diphosphate. The polypeptide is Leucine--tRNA ligase (Roseiflexus castenholzii (strain DSM 13941 / HLO8)).